The sequence spans 424 residues: Glutamyl-tRNA reductase (424 aa).

Substrate is bound by residues 53–56 (TCNR), Ser111, 116–118 (EPQ), and Gln122. Cys54 functions as the Nucleophile in the catalytic mechanism. 191–196 (GAGEMI) serves as a coordination point for NADP(+).

It belongs to the glutamyl-tRNA reductase family. Homodimer.

The catalysed reaction is (S)-4-amino-5-oxopentanoate + tRNA(Glu) + NADP(+) = L-glutamyl-tRNA(Glu) + NADPH + H(+). It participates in porphyrin-containing compound metabolism; protoporphyrin-IX biosynthesis; 5-aminolevulinate from L-glutamyl-tRNA(Glu): step 1/2. Catalyzes the NADPH-dependent reduction of glutamyl-tRNA(Glu) to glutamate 1-semialdehyde (GSA). The polypeptide is Glutamyl-tRNA reductase (Bordetella bronchiseptica (strain ATCC BAA-588 / NCTC 13252 / RB50) (Alcaligenes bronchisepticus)).